Consider the following 229-residue polypeptide: PKHD-type hydroxylase RPD_3334 (229 aa).

The 103-residue stretch at 78–180 (QIFPPLFNRY…RVASFFWLQS (103 aa)) folds into the Fe2OG dioxygenase domain. His98, Asp100, and His161 together coordinate Fe cation. Residue Arg171 coordinates 2-oxoglutarate.

The cofactor is Fe(2+). L-ascorbate serves as cofactor.

This chain is PKHD-type hydroxylase RPD_3334, found in Rhodopseudomonas palustris (strain BisB5).